The primary structure comprises 525 residues: GMP synthase [glutamine-hydrolyzing] (525 aa).

Positions 12–203 (TVLVVDFGAQ…LYRGAGLTPS (192 aa)) constitute a Glutamine amidotransferase type-1 domain. The Nucleophile role is filled by Cys-89. Residues His-177 and Glu-179 contribute to the active site. Residues 204-399 (WTTGNVIDEQ…LGLPDEIVQR (196 aa)) enclose the GMPS ATP-PPase domain. 231-237 (SGGVDSA) provides a ligand contact to ATP.

Homodimer.

The catalysed reaction is XMP + L-glutamine + ATP + H2O = GMP + L-glutamate + AMP + diphosphate + 2 H(+). The protein operates within purine metabolism; GMP biosynthesis; GMP from XMP (L-Gln route): step 1/1. Functionally, catalyzes the synthesis of GMP from XMP. The chain is GMP synthase [glutamine-hydrolyzing] from Streptomyces avermitilis (strain ATCC 31267 / DSM 46492 / JCM 5070 / NBRC 14893 / NCIMB 12804 / NRRL 8165 / MA-4680).